Consider the following 239-residue polypeptide: uncharacterized protein (239 aa).

Positions 1–19 (MPLLHRTIIFLQLLGTISS) are cleaved as a signal peptide. N-linked (GlcNAc...) asparagine glycosylation is found at Asn44, Asn58, Asn72, Asn92, Asn109, Asn136, Asn172, Asn192, and Asn213.

It is found in the secreted. This is an uncharacterized protein from Caenorhabditis elegans.